The following is a 462-amino-acid chain: MTILKNIPKVDKVLGWEGLKSLLAAYPRPVVITAVRSSLEALRAEALRGETCAEAFAEKGVVGRIARELATVNALKLKRLVNGTGVVIHTNLGRSPLPESVRQALNEVAFGYSNLEFDLALGERGSRYSHVEGIICELTGAEAALVVNNNAAAVLLALSSLAAGKEVIVSRGELVEIGGSFRIPDVMRQSGAVLKEVGATNRTHPRDYSGAITPETALLLKVHCSNFAVVGFTAEVSAAELVELGRGHSLPVMADVGSGNLVELSGLLGCNEPTVQEFVRAGVDVITFSGDKLLGGPQAGIIVGKSSLLAPMKNHPLLRAVRIDKLTLAALEGTLRLYRDERRALKEIPTLRMLTASAADLSRTAKALLRRLQRAIPATVKLSLSAGFSQVGGGALPLLELPTTLIAVTADGMSAQDIETTLRGCPVPVIGRIFKGTFLLDPRTILNDDVPALIAALQTLAR.

Lys-292 is subject to N6-(pyridoxal phosphate)lysine.

The protein belongs to the SelA family. It depends on pyridoxal 5'-phosphate as a cofactor.

It is found in the cytoplasm. The catalysed reaction is L-seryl-tRNA(Sec) + selenophosphate + H(+) = L-selenocysteinyl-tRNA(Sec) + phosphate. It functions in the pathway aminoacyl-tRNA biosynthesis; selenocysteinyl-tRNA(Sec) biosynthesis; selenocysteinyl-tRNA(Sec) from L-seryl-tRNA(Sec) (bacterial route): step 1/1. Its function is as follows. Converts seryl-tRNA(Sec) to selenocysteinyl-tRNA(Sec) required for selenoprotein biosynthesis. This chain is L-seryl-tRNA(Sec) selenium transferase, found in Geotalea uraniireducens (strain Rf4) (Geobacter uraniireducens).